Here is a 206-residue protein sequence, read N- to C-terminus: Large ribosomal subunit protein uL4 (206 aa).

The protein belongs to the universal ribosomal protein uL4 family. As to quaternary structure, part of the 50S ribosomal subunit.

One of the primary rRNA binding proteins, this protein initially binds near the 5'-end of the 23S rRNA. It is important during the early stages of 50S assembly. It makes multiple contacts with different domains of the 23S rRNA in the assembled 50S subunit and ribosome. Functionally, forms part of the polypeptide exit tunnel. In Paracoccus denitrificans (strain Pd 1222), this protein is Large ribosomal subunit protein uL4.